Consider the following 238-residue polypeptide: CFA/I fimbrial subunit A (238 aa).

A signal peptide spans 1–19; the sequence is MHKLFYLLSLLMAPFVANA.

It localises to the fimbrium. Functionally, might function as a shuttle protein in the transport of fimbria through the periplasmic space or might function as an adhesin. The protein is CFA/I fimbrial subunit A (cfaA) of Escherichia coli.